An 87-amino-acid polypeptide reads, in one-letter code: Small ribosomal subunit protein uS15 (87 aa).

This sequence belongs to the universal ribosomal protein uS15 family. In terms of assembly, part of the 30S ribosomal subunit. Forms a bridge to the 50S subunit in the 70S ribosome, contacting the 23S rRNA.

Its function is as follows. One of the primary rRNA binding proteins, it binds directly to 16S rRNA where it helps nucleate assembly of the platform of the 30S subunit by binding and bridging several RNA helices of the 16S rRNA. In terms of biological role, forms an intersubunit bridge (bridge B4) with the 23S rRNA of the 50S subunit in the ribosome. The chain is Small ribosomal subunit protein uS15 from Pseudothermotoga lettingae (strain ATCC BAA-301 / DSM 14385 / NBRC 107922 / TMO) (Thermotoga lettingae).